The primary structure comprises 354 residues: Thiamine thiazole synthase (354 aa).

Substrate-binding positions include A83, 104–105 (EA), G112, and V177. C210 carries the post-translational modification 2,3-didehydroalanine (Cys). Substrate-binding positions include D212, H227, M305, and 315 to 317 (RMR).

The protein belongs to the THI4 family. In terms of assembly, homooctamer. Requires Fe cation as cofactor. Post-translationally, during the catalytic reaction, a sulfide is transferred from Cys-210 to a reaction intermediate, generating a dehydroalanine residue.

Its subcellular location is the cytoplasm. The protein resides in the nucleus. It catalyses the reaction [ADP-thiazole synthase]-L-cysteine + glycine + NAD(+) = [ADP-thiazole synthase]-dehydroalanine + ADP-5-ethyl-4-methylthiazole-2-carboxylate + nicotinamide + 3 H2O + 2 H(+). In terms of biological role, involved in biosynthesis of the thiamine precursor thiazole. Catalyzes the conversion of NAD and glycine to adenosine diphosphate 5-(2-hydroxyethyl)-4-methylthiazole-2-carboxylic acid (ADT), an adenylated thiazole intermediate. The reaction includes an iron-dependent sulfide transfer from a conserved cysteine residue of the protein to a thiazole intermediate. The enzyme can only undergo a single turnover, which suggests it is a suicide enzyme. May have additional roles in adaptation to various stress conditions and in DNA damage tolerance. This chain is Thiamine thiazole synthase, found in Candida albicans (strain WO-1) (Yeast).